We begin with the raw amino-acid sequence, 378 residues long: Ribosomal RNA large subunit methyltransferase G (378 aa).

The protein belongs to the methyltransferase superfamily. RlmG family.

The protein localises to the cytoplasm. The catalysed reaction is guanosine(1835) in 23S rRNA + S-adenosyl-L-methionine = N(2)-methylguanosine(1835) in 23S rRNA + S-adenosyl-L-homocysteine + H(+). Specifically methylates the guanine in position 1835 (m2G1835) of 23S rRNA. The protein is Ribosomal RNA large subunit methyltransferase G of Salmonella paratyphi B (strain ATCC BAA-1250 / SPB7).